Here is a 311-residue protein sequence, read N- to C-terminus: Glycosyltransferase 6 domain-containing protein 1 (311 aa).

Residues Met1–Arg5 lie on the Cytoplasmic side of the membrane. The helical; Signal-anchor for type II membrane protein transmembrane segment at Arg6–Phe26 threads the bilayer. Residues Arg27 to Leu311 lie on the Lumenal side of the membrane. A glycan (N-linked (GlcNAc...) asparagine) is linked at Asn77. Residues Phe85 to Leu90, Asn176 to Asn178, and His198 to Trp201 each bind substrate. The Nucleophile role is filled by Glu266.

The protein belongs to the glycosyltransferase 6 family. The cofactor is Mn(2+).

The protein localises to the membrane. The polypeptide is Glycosyltransferase 6 domain-containing protein 1 (Glt6d1) (Mus musculus (Mouse)).